We begin with the raw amino-acid sequence, 172 residues long: NAD(P)H-quinone oxidoreductase subunit J (172 aa).

The protein belongs to the complex I 30 kDa subunit family. In terms of assembly, NDH-1 can be composed of about 15 different subunits; different subcomplexes with different compositions have been identified which probably have different functions.

The protein localises to the cellular thylakoid membrane. It catalyses the reaction a plastoquinone + NADH + (n+1) H(+)(in) = a plastoquinol + NAD(+) + n H(+)(out). The enzyme catalyses a plastoquinone + NADPH + (n+1) H(+)(in) = a plastoquinol + NADP(+) + n H(+)(out). NDH-1 shuttles electrons from an unknown electron donor, via FMN and iron-sulfur (Fe-S) centers, to quinones in the respiratory and/or the photosynthetic chain. The immediate electron acceptor for the enzyme in this species is believed to be plastoquinone. Couples the redox reaction to proton translocation, and thus conserves the redox energy in a proton gradient. Cyanobacterial NDH-1 also plays a role in inorganic carbon-concentration. The polypeptide is NAD(P)H-quinone oxidoreductase subunit J (Synechococcus sp. (strain ATCC 27144 / PCC 6301 / SAUG 1402/1) (Anacystis nidulans)).